The following is a 313-amino-acid chain: Small ribosomal subunit protein uS2 (313 aa).

The residue at position 2 (Ser-2) is an N-acetylserine. 2 laminin-binding regions span residues Ile-161 to Arg-180 and Arg-205 to Gly-229. 2 [DE]-W-[ST] repeats span residues Glu-230 to Ser-232 and Asp-245 to Ser-247. The segment at Glu-242 to Ser-313 is laminin-binding. Residues Pro-262–Pro-274 are compositionally biased toward low complexity. A disordered region spans residues Pro-262–Ser-313. 3 [DE]-W-[ST] repeats span residues Asp-284–Ser-286, Asp-293–Ser-295, and Asp-311–Ser-313. Residues Asp-284–Ser-313 are compositionally biased toward polar residues.

This sequence belongs to the universal ribosomal protein uS2 family. Monomer (37LRP) and homodimer (67LR). Component of the small ribosomal subunit. Mature ribosomes consist of a small (40S) and a large (60S) subunit. The 40S subunit contains about 33 different proteins and 1 molecule of RNA (18S). The 60S subunit contains about 49 different proteins and 3 molecules of RNA (28S, 5.8S and 5S). Interacts with rps21. Interacts with several laminins including at least lamb1. Interacts with mdk. In terms of processing, acylated. Acylation may be a prerequisite for conversion of the monomeric 37 kDa laminin receptor precursor (37LRP) to the mature dimeric 67 kDa laminin receptor (67LR), and may provide a mechanism for membrane association. Cleaved by stromelysin-3 (ST3) at the cell surface. Cleavage by stromelysin-3 may be a mechanism to alter cell-extracellular matrix interactions.

It is found in the cell membrane. The protein localises to the cytoplasm. The protein resides in the nucleus. Its function is as follows. Required for the assembly and/or stability of the 40S ribosomal subunit. Required for the processing of the 20S rRNA-precursor to mature 18S rRNA in a late step of the maturation of 40S ribosomal subunits. Also functions as a cell surface receptor for laminin. Plays a role in cell adhesion to the basement membrane and in the consequent activation of signaling transduction pathways. May play a role in cell fate determination and tissue morphogenesis. This is Small ribosomal subunit protein uS2 (rpsa) from Solea senegalensis (Senegalese sole).